We begin with the raw amino-acid sequence, 266 residues long: MRVTLATIAWMVSFVSNYSHTANILPDIENEDFIKDCVRIHNKFRSEVKPTASDMLYMTWDPALAQIAKAWASNCQFSHNTRLKPPHKLHPNFTSLGENIWTGSVPIFSVSSAITNWYDEIQDYDFKTRICKKVCGHYTQVVWADSYKVGCAVQFCPKVSGFDALSNGAHFICNYGPGGNYPTWPYKRGATCSACPNNDKCLDNLCVNRQRDQVKRYYSVVYPGWPIYPRNRYTSLFLIVNSVILILSVIITILVQHKYPNLVLLD.

Residues 1–21 (MRVTLATIAWMVSFVSNYSHT) form the signal peptide. In terms of domain architecture, SCP spans 38 to 175 (VRIHNKFRSE…SNGAHFICNY (138 aa)). Residues 233–255 (YTSLFLIVNSVILILSVIITILV) traverse the membrane as a helical segment.

This sequence belongs to the CRISP family. In terms of tissue distribution, according to PubMed:8973356, it is ubiquitously expressed with high levels in lung and kidney and low levels in heart and liver. Highly expressed in cell lines derived from nervous system tumors arising from glia, low or absent in non-glial-derived nervous system tumor cell lines. Also found in fetal kidney. According to PubMed:7607567 it is expressed only in brain tumor glioblastoma multiforme/astrocytoma and not in other nervous system tumors or normal fetal or adult tissues.

The protein resides in the membrane. This Homo sapiens (Human) protein is Glioma pathogenesis-related protein 1 (GLIPR1).